The primary structure comprises 435 residues: Glutamyl-tRNA reductase (435 aa).

Substrate is bound by residues 49–52 (TCNR), Ser-109, 114–116 (EGQ), and Gln-120. The active-site Nucleophile is Cys-50. 198-203 (GAGRMS) provides a ligand contact to NADP(+).

It belongs to the glutamyl-tRNA reductase family. In terms of assembly, homodimer.

The catalysed reaction is (S)-4-amino-5-oxopentanoate + tRNA(Glu) + NADP(+) = L-glutamyl-tRNA(Glu) + NADPH + H(+). The protein operates within porphyrin-containing compound metabolism; protoporphyrin-IX biosynthesis; 5-aminolevulinate from L-glutamyl-tRNA(Glu): step 1/2. It functions in the pathway porphyrin-containing compound metabolism; chlorophyll biosynthesis. Its function is as follows. Catalyzes the NADPH-dependent reduction of glutamyl-tRNA(Glu) to glutamate 1-semialdehyde (GSA). The polypeptide is Glutamyl-tRNA reductase (Prochlorococcus marinus (strain MIT 9515)).